The primary structure comprises 394 residues: Enoyl-CoA delta isomerase 2 (394 aa).

Residues 1–38 constitute a mitochondrion transit peptide; the sequence is MAMAYLAWRLARRSCPSSLQVTSFPVVQLHMNRTAMRA. The region spanning 39–124 is the ACB domain; it reads SQKDFENSMN…VSSLSPSLES (86 aa). Position 51 is an N6-acetyllysine; alternate (Lys51). Residue Lys51 is modified to N6-succinyllysine; alternate. Lys55 is subject to N6-succinyllysine. Lys62 bears the N6-acetyllysine; alternate mark. The residue at position 62 (Lys62) is an N6-succinyllysine; alternate. 66 to 70 contributes to the an acyl-CoA binding site; sequence YALYK. 3 positions are modified to N6-succinyllysine: Lys70, Lys81, and Lys90. The residue at position 92 (Lys92) is an N6-acetyllysine; alternate. Residue Lys92 is modified to N6-succinyllysine; alternate. Lys92 serves as a coordination point for an acyl-CoA. Ser101 carries the phosphoserine modification. Position 111 (Tyr111) interacts with an acyl-CoA. The residue at position 119 (Ser119) is a Phosphoserine. Residues 151–322 form an ECH-like region; sequence TKIMFNRPKK…AQGLVTEVFP (172 aa). Lys161 bears the N6-succinyllysine mark. Substrate is bound at residue 198–202; that stretch reads SGNDL. Lys289 is modified (N6-succinyllysine). A Microbody targeting signal motif is present at residues 392–394; sequence SKL.

It in the C-terminal section; belongs to the enoyl-CoA hydratase/isomerase family. Abundant in heart, skeletal muscle and liver. Expressed in CD34(+) T-cells and CD34(+) bone marrow cells.

The protein localises to the mitochondrion. Its subcellular location is the peroxisome matrix. The enzyme catalyses a (3Z)-enoyl-CoA = a 4-saturated (2E)-enoyl-CoA. It catalyses the reaction (3Z)-octenoyl-CoA = (2E)-octenoyl-CoA. It carries out the reaction a (3E)-enoyl-CoA = a 4-saturated (2E)-enoyl-CoA. The catalysed reaction is (2E)-tetradecenoyl-CoA = (3Z)-tetradecenoyl-CoA. The enzyme catalyses (3E)-tetradecenoyl-CoA = (2E)-tetradecenoyl-CoA. It catalyses the reaction (3E)-octenoyl-CoA = (2E)-octenoyl-CoA. It carries out the reaction (3E)-nonenoyl-CoA = (2E)-nonenoyl-CoA. It participates in lipid metabolism; fatty acid beta-oxidation. Able to isomerize both 3-cis and 3-trans double bonds into the 2-trans form in a range of enoyl-CoA species. Has a preference for 3-trans substrates. The protein is Enoyl-CoA delta isomerase 2 (ECI2) of Homo sapiens (Human).